We begin with the raw amino-acid sequence, 664 residues long: NADH-ubiquinone oxidoreductase chain 5 (664 aa).

The next 17 helical transmembrane spans lie at 2–22, 28–48, 77–97, 120–140, 168–188, 210–230, 250–270, 285–305, 321–341, 342–362, 376–396, 424–444, 462–482, 521–541, 590–610, 614–634, and 639–659; these read LLLT…LFGF, GSVF…LIII, FLFD…STLV, LFTF…MFVG, AMLV…TIFY, FIFF…IFIG, GPTP…GVYL, LKII…VGLV, LGYM…FHLS, NHAY…HAMG, ILPF…GFPF, LGTI…FFAF, PLEM…IGYI, LPVI…FFKF, IDKG…FSFL, IILL…ISTI, and IIFF…FLFI.

Belongs to the complex I subunit 5 family.

It is found in the mitochondrion inner membrane. The enzyme catalyses a ubiquinone + NADH + 5 H(+)(in) = a ubiquinol + NAD(+) + 4 H(+)(out). In terms of biological role, core subunit of the mitochondrial membrane respiratory chain NADH dehydrogenase (Complex I) that is believed to belong to the minimal assembly required for catalysis. Complex I functions in the transfer of electrons from NADH to the respiratory chain. The immediate electron acceptor for the enzyme is believed to be ubiquinone. The sequence is that of NADH-ubiquinone oxidoreductase chain 5 (ND5) from Phytophthora infestans (Potato late blight agent).